We begin with the raw amino-acid sequence, 644 residues long: Exoribonuclease 2 (644 aa).

In terms of domain architecture, RNB spans 189 to 516 (REDLTALNFV…NHRLLKAIIT (328 aa)). The S1 motif domain maps to 561-643 (DTRFTAEIID…ETRNVIARPV (83 aa)).

The protein belongs to the RNR ribonuclease family. RNase II subfamily.

It is found in the cytoplasm. It catalyses the reaction Exonucleolytic cleavage in the 3'- to 5'-direction to yield nucleoside 5'-phosphates.. Its function is as follows. Involved in mRNA degradation. Hydrolyzes single-stranded polyribonucleotides processively in the 3' to 5' direction. In Yersinia pseudotuberculosis serotype O:3 (strain YPIII), this protein is Exoribonuclease 2.